Reading from the N-terminus, the 227-residue chain is MKPAIVLLSGGLDSATVLAIAKAEGFAPAALTFRYGQRHAVEIRAAERVAAALGIRDHRIADIDLRVFGGSALTSDIAVPKGELDEAIPAGIPVTYVPARNTIMLSFALAFAEVLGAADIFVGVNAVDYSGYPDCRPDYIKAFEAMANLATKAAVEGTRLTIHTPLIDLTKGQIIRRGLDLGVDYSITSTCYDPTPDGKACGHCDSCRLRLKGFAEAGLADPAEYAS.

8–18 (LSGGLDSATVL) is an ATP binding site. Zn(2+) contacts are provided by Cys191, Cys201, Cys204, and Cys207.

The protein belongs to the QueC family. Zn(2+) is required as a cofactor.

It carries out the reaction 7-carboxy-7-deazaguanine + NH4(+) + ATP = 7-cyano-7-deazaguanine + ADP + phosphate + H2O + H(+). Its pathway is purine metabolism; 7-cyano-7-deazaguanine biosynthesis. Catalyzes the ATP-dependent conversion of 7-carboxy-7-deazaguanine (CDG) to 7-cyano-7-deazaguanine (preQ(0)). In Paramagnetospirillum magneticum (strain ATCC 700264 / AMB-1) (Magnetospirillum magneticum), this protein is 7-cyano-7-deazaguanine synthase.